A 245-amino-acid chain; its full sequence is Nisin immunity protein (245 aa).

Residues 1-19 (MRRYLILIVALIGITGLSG) form the signal peptide. Cysteine 20 carries the N-palmitoyl cysteine lipid modification. Cysteine 20 carries S-diacylglycerol cysteine lipidation.

It localises to the cell membrane. In terms of biological role, involved in immunity against exogenously supplied nisin. The polypeptide is Nisin immunity protein (nisI) (Lactococcus lactis subsp. lactis (Streptococcus lactis)).